We begin with the raw amino-acid sequence, 474 residues long: Cysteine--tRNA ligase (474 aa).

Cysteine 28 serves as a coordination point for Zn(2+). The 'HIGH' region signature appears at 30 to 40 (ITVYDLCHLGH). 3 residues coordinate Zn(2+): cysteine 209, histidine 234, and glutamate 238. A 'KMSKS' region motif is present at residues 269 to 273 (KMSKS). An ATP-binding site is contributed by lysine 272.

Belongs to the class-I aminoacyl-tRNA synthetase family. In terms of assembly, monomer. It depends on Zn(2+) as a cofactor.

The protein resides in the cytoplasm. The catalysed reaction is tRNA(Cys) + L-cysteine + ATP = L-cysteinyl-tRNA(Cys) + AMP + diphosphate. The sequence is that of Cysteine--tRNA ligase from Blochmanniella floridana.